We begin with the raw amino-acid sequence, 689 residues long: Glycine--tRNA ligase beta subunit (689 aa).

The protein belongs to the class-II aminoacyl-tRNA synthetase family. Tetramer of two alpha and two beta subunits.

Its subcellular location is the cytoplasm. It carries out the reaction tRNA(Gly) + glycine + ATP = glycyl-tRNA(Gly) + AMP + diphosphate. This chain is Glycine--tRNA ligase beta subunit, found in Shewanella putrefaciens (strain CN-32 / ATCC BAA-453).